The primary structure comprises 339 residues: tRNA N6-adenosine threonylcarbamoyltransferase (339 aa).

Fe cation is bound by residues His-117 and His-121. Substrate contacts are provided by residues 140–144, Asp-173, Gly-186, and Asn-279; that span reads VVSGG. Residue Asp-307 coordinates Fe cation.

Belongs to the KAE1 / TsaD family. It depends on Fe(2+) as a cofactor.

The protein resides in the cytoplasm. It catalyses the reaction L-threonylcarbamoyladenylate + adenosine(37) in tRNA = N(6)-L-threonylcarbamoyladenosine(37) in tRNA + AMP + H(+). In terms of biological role, required for the formation of a threonylcarbamoyl group on adenosine at position 37 (t(6)A37) in tRNAs that read codons beginning with adenine. Is involved in the transfer of the threonylcarbamoyl moiety of threonylcarbamoyl-AMP (TC-AMP) to the N6 group of A37, together with TsaE and TsaB. TsaD likely plays a direct catalytic role in this reaction. The chain is tRNA N6-adenosine threonylcarbamoyltransferase from Syntrophomonas wolfei subsp. wolfei (strain DSM 2245B / Goettingen).